We begin with the raw amino-acid sequence, 213 residues long: Ergothioneine transport ATP-binding protein EgtV (213 aa).

The ABC transporter domain maps to 5–212 (VTIENVSFNY…ATKTLEIKAL (208 aa)). 37–44 (GESGSGKS) is a binding site for ATP.

Belongs to the ABC transporter superfamily. The complex is composed of two ATP-binding proteins (EgtV) and two transmembrane proteins (EgtU).

It localises to the cell inner membrane. The catalysed reaction is ergothioneine(out) + ATP + H2O = ergothioneine(in) + ADP + phosphate + H(+). In terms of biological role, part of the ABC transporter complex EgtUV involved in the uptake of ergothioneine (EGT), a natural low-molecular weight (LMW) thiol antioxidant which protects H.pylori against bleach stress. Responsible for energy coupling to the transport system. This is Ergothioneine transport ATP-binding protein EgtV from Helicobacter pylori (strain G27).